Here is a 274-residue protein sequence, read N- to C-terminus: Glutamate--cysteine ligase regulatory subunit (274 aa).

Ser-59 bears the Phosphoserine mark. Lys-263 is subject to N6-acetyllysine.

Belongs to the aldo/keto reductase family. Glutamate--cysteine ligase light chain subfamily. As to quaternary structure, heterodimer of a catalytic heavy chain and a regulatory light chain.

It participates in sulfur metabolism; glutathione biosynthesis; glutathione from L-cysteine and L-glutamate: step 1/2. This is Glutamate--cysteine ligase regulatory subunit (Gclm) from Mus musculus (Mouse).